Here is a 614-residue protein sequence, read N- to C-terminus: Dihydroxy-acid dehydratase (614 aa).

Asp81 contributes to the Mg(2+) binding site. Cys122 contacts [2Fe-2S] cluster. 2 residues coordinate Mg(2+): Asp123 and Lys124. Lys124 carries the N6-carboxylysine modification. Cys193 provides a ligand contact to [2Fe-2S] cluster. Glu489 is a Mg(2+) binding site. Residue Ser515 is the Proton acceptor of the active site.

The protein belongs to the IlvD/Edd family. Homodimer. [2Fe-2S] cluster serves as cofactor. It depends on Mg(2+) as a cofactor.

The enzyme catalyses (2R)-2,3-dihydroxy-3-methylbutanoate = 3-methyl-2-oxobutanoate + H2O. It catalyses the reaction (2R,3R)-2,3-dihydroxy-3-methylpentanoate = (S)-3-methyl-2-oxopentanoate + H2O. The protein operates within amino-acid biosynthesis; L-isoleucine biosynthesis; L-isoleucine from 2-oxobutanoate: step 3/4. It functions in the pathway amino-acid biosynthesis; L-valine biosynthesis; L-valine from pyruvate: step 3/4. In terms of biological role, functions in the biosynthesis of branched-chain amino acids. Catalyzes the dehydration of (2R,3R)-2,3-dihydroxy-3-methylpentanoate (2,3-dihydroxy-3-methylvalerate) into 2-oxo-3-methylpentanoate (2-oxo-3-methylvalerate) and of (2R)-2,3-dihydroxy-3-methylbutanoate (2,3-dihydroxyisovalerate) into 2-oxo-3-methylbutanoate (2-oxoisovalerate), the penultimate precursor to L-isoleucine and L-valine, respectively. This Saccharophagus degradans (strain 2-40 / ATCC 43961 / DSM 17024) protein is Dihydroxy-acid dehydratase.